We begin with the raw amino-acid sequence, 386 residues long: 2-deoxy-scyllo-inosose synthase (386 aa).

Residues aspartate 42, 73–76 (EEHK), 105–109 (GVTGN), 129–130 (TT), 140–142 (SLK), and 151–152 (KN) contribute to the NAD(+) site. Residue lysine 142 is part of the active site. Glutamate 184 contributes to the Co(2+) binding site. Glutamate 244 is an active-site residue. Residues histidine 247 and histidine 263 each contribute to the Co(2+) site.

It belongs to the sugar phosphate cyclases superfamily. DOI synthase family. NAD(+) is required as a cofactor. Requires Co(2+) as cofactor.

The enzyme catalyses D-glucose 6-phosphate = 2-deoxy-L-scyllo-inosose + phosphate. It functions in the pathway metabolic intermediate biosynthesis; 2-deoxystreptamine biosynthesis; 2-deoxystreptamine from D-glucose 6-phosphate: step 1/4. It participates in antibiotic biosynthesis; tobramycin biosynthesis. Catalyzes the intramolecular carbocycle formation from D-glucose-6-phosphate to 2-deoxy-scyllo-inosose (DOI). This Streptoalloteichus tenebrarius (strain ATCC 17920 / DSM 40477 / JCM 4838 / CBS 697.72 / NBRC 16177 / NCIMB 11028 / NRRL B-12390 / A12253. 1 / ISP 5477) (Streptomyces tenebrarius) protein is 2-deoxy-scyllo-inosose synthase (tbmA).